The sequence spans 397 residues: Teichoic acid D-alanine hydrolase (397 aa).

Positions 1–23 (MKFNKVKLVIHACVLLFIIISIA) are cleaved as a signal peptide.

It localises to the cell membrane. It catalyses the reaction [(4-D-Ala)-(2-GlcNAc)-Rib-ol-P]n-[Gro-P]m-beta-D-ManNAc-(1-&gt;4)-alpha-D-GlcNAc-P-peptidoglycan + n H2O = [(2-GlcNAc)-Rib-ol-P]n-[Gro-P]m-beta-D-ManNAc-(1-&gt;4)-alpha-D-GlcNAc-P-peptidoglycan + n D-alanine.. In terms of biological role, catalyzes the liberation of D-alanyl moieties present on wall teichoic acid (WTA) and lipoteichoic acid (LTA). Affects the methicillin resistance level and autolysis in the presence of Triton X-100 as well as the cell wall structure. The polypeptide is Teichoic acid D-alanine hydrolase (fmtA) (Staphylococcus aureus (strain NCTC 8325 / PS 47)).